We begin with the raw amino-acid sequence, 614 residues long: MALPTQQSEELRLYQQTLLQDGLKDMLDHNNFIDCVLKIQGKEFPCHRLVLASCSPYFRAMFLSDLEESKKKEIDLEDVDPDVMGKILHYIYTSEIEITEKNVQDIFSVANMFQIPSIFTVCVSFLQKKLCLSNCLAIFRLGLLLDCPRLAVSARDFVCDRFNLIARDSELYELSPDELIAVISSDSLNIEKEEDVFEVVMKWASKEKEKRTKALPVIFESIRFCLIPQDYIKNKVEKHELVKPNKELLKKLQIVKDAQQGKLPSLKKKTSAKASEGKDGEQVVNGELDEEEEALPGILNDTLRFGMFLKDMIFMISDTGAVAYDPSANECFFASLSAQIPKNHVSLATKENQLFVAGGLYYNEESKEEPLSSYFLQFDHLDSDWLGMPPVPSARCLFGLGESENSIYLIGGKELKEGEQMLDSVLCYDRPSFKWGESDPLPYKVYGHTVVSHDNLVYVLGGKGNEKKCLKRVCVYNPKKFEWKDLAPMKTGRSLFGATVHKGKIFIAAGVTDTGLTNTIEAYDIKTNKWEDFTEFPQERSSLSLVSMNGTLYAIGGFATIENESEELVPTELNDIWRFNEEEKKWEGILREIRYASGATFIAARLNILRLTKM.

Residues 33-100 (IDCVLKIQGK…IYTSEIEITE (68 aa)) enclose the BTB domain. The region spanning 135-237 (CLAIFRLGLL…PQDYIKNKVE (103 aa)) is the BACK domain. Kelch repeat units follow at residues 353–405 (QLFV…ESEN), 406–455 (SIYL…SHDN), 456–503 (LVYV…VHKG), 504–550 (KIFI…SMNG), and 552–606 (LYAI…AARL).

This sequence belongs to the KLHL40 family. In terms of assembly, component of the BCR(KLHL40) E3 ubiquitin ligase complex.

It localises to the cytoplasm. The protein resides in the myofibril. It is found in the sarcomere. Its subcellular location is the a band. The protein localises to the i band. Functionally, substrate-specific adapter of a BCR (BTB-CUL3-RBX1) E3 ubiquitin ligase complex that acts as a key regulator of skeletal muscle development. The protein is Kelch-like protein 40 (klhl40) of Xenopus laevis (African clawed frog).